A 454-amino-acid polypeptide reads, in one-letter code: tRNA modification GTPase MnmE (454 aa).

Residues Arg-23, Glu-80, and Lys-120 each contribute to the (6S)-5-formyl-5,6,7,8-tetrahydrofolate site. Positions 216-377 (GMKVVIAGRP…LRDHLKQSMG (162 aa)) constitute a TrmE-type G domain. Asn-226 contributes to the K(+) binding site. GTP is bound by residues 226 to 231 (NAGKSS), 245 to 251 (TDIAGTT), 270 to 273 (DTAG), 335 to 338 (NKAD), and 358 to 360 (SAR). Position 230 (Ser-230) interacts with Mg(2+). Residues Thr-245, Ile-247, and Thr-250 each coordinate K(+). Thr-251 serves as a coordination point for Mg(2+). Lys-454 contacts (6S)-5-formyl-5,6,7,8-tetrahydrofolate.

It belongs to the TRAFAC class TrmE-Era-EngA-EngB-Septin-like GTPase superfamily. TrmE GTPase family. As to quaternary structure, homodimer. Heterotetramer of two MnmE and two MnmG subunits. The cofactor is K(+).

It localises to the cytoplasm. Functionally, exhibits a very high intrinsic GTPase hydrolysis rate. Involved in the addition of a carboxymethylaminomethyl (cmnm) group at the wobble position (U34) of certain tRNAs, forming tRNA-cmnm(5)s(2)U34. This is tRNA modification GTPase MnmE from Pectobacterium carotovorum subsp. carotovorum (strain PC1).